The primary structure comprises 188 residues: Killer cell lectin-like receptor subfamily G member 1 (188 aa).

The Cytoplasmic segment spans residues Met1–Pro33. The ITIM motif signature appears at Ser5–Leu10. Residues His34–Tyr56 traverse the membrane as a helical; Signal-anchor for type II membrane protein segment. At Gln57–Tyr188 the chain is on the extracellular side. The cysteines at positions 75 and 86 are disulfide-linked. N-linked (GlcNAc...) asparagine glycans are attached at residues Asn82 and Asn97. One can recognise a C-type lectin domain in the interval Asn82–Lys184. Disulfide bonds link Cys103/Cys183 and Cys162/Cys175.

Forms a monomer and homodimer; disulfide-linked. Interacts (via ITIM motif) with PTPN11 and INPP5D. Post-translationally, phosphorylated in response to monoclonal antibody G63 binding and antigenic stimulation. In terms of tissue distribution, expressed specifically on natural killer (NK) cells and activated CD8 T-cells. Not detected in spleen, thymus, lymph node, testis, brain or kidney. Not detected on mast cell lines, bone marrow-derived mast cells, or peritoneal mast cells.

The protein localises to the cell membrane. Functionally, plays an inhibitory role on natural killer (NK) cells and T-cell functions upon binding to their non-MHC ligands. May mediate missing self recognition by binding to a highly conserved site on classical cadherins, enabling it to monitor expression of E-cadherin/CDH1, N-cadherin/CDH2 and R-cadherin/CDH4 on target cells. The chain is Killer cell lectin-like receptor subfamily G member 1 (Klrg1) from Mus musculus (Mouse).